Here is a 251-residue protein sequence, read N- to C-terminus: Small ribosomal subunit protein uS2 (251 aa).

It belongs to the universal ribosomal protein uS2 family.

The polypeptide is Small ribosomal subunit protein uS2 (Nitrosomonas eutropha (strain DSM 101675 / C91 / Nm57)).